The chain runs to 1666 residues: MGPAAGPSLLLLLLASVSLALGDPMYSIITPNILRLENEETVVLEAHEVQGDIPVTVTVHDFPAKKNVLSSEKTVLTSATGYLGTVTIKIPASKEFKSDKGRKLVVVQAAFGGTQLEKVVLVSLQSGYLFIQTDKTIYTPGSTVLYRIFTVDSDLLPVGRTIIVTIETPDGIPIKRDTLSSNNQHGILPLSWNIPELVNMGQWKIQAFYENSPKQVFSAEFEVKEYVLPSFEVLVEPTEKFYYIDDPKGLEVNIIARFLYGKNVDGTAFVIFGVQDGDQRISLAQSLTRVVIEDGSGEVVLSRQVLLDGVQPSRPEALVGKSLYVSVTVILHSGSDMVEAERSGIPIVTSPYQIHFTKTPKYFKPAMPFEIMVLVTNPDGSPAPHVPVVTQGSNVQSLTQADGVARLSINTPNTRQPLSVTVQTKKGGIPDARQAINTMQALPYTTMYNSNNYLHLSMPRTELKPGETINVNFHLRSDPNQEAKIRYYTYLIMNKGKLLKVGRQPREPGQALVVLPMPITKELIPSFRLVAYYTLIGASAQREVVADSVWADVRDSCVGTLVVKGGSGKDGQDKRQQHLPRQQMTLRIEGNQGARVGLVAVDKGVFVLNKKHKLTQSKIWDVVEKADIGCTPGSGKDYAGVFTDAGLSFKSSKAGLQTAQREGLDCPKPAARRRRSVQLMERRMDKAGKYKSKELRRCCEDGMRENPMQFSCQRRARYVSLGEACVKAFLDCCTYMAQLRQQHRREQNLGLARSDMDEDIIPEEDIISRSQFPESWLWTIEELKEPERNGISTKTMNIFLKDSITTWEILAVSLSDKKGICVADPFEVTVMQDFFIDLRLPYSVVRNEQVEIRAVLYNYREAQSLKVRVELLHNPAFCSLATAKKRHTQTVTIGPKSSVAVPYVLVPLKIGLQEVEVKAAVYNYFISDGVKKTLKVVPEGMRVNKTVAIRTLNPEQLGQGGVQREEIPAADLSDQVPDTDSETKILLQGTPVAQMAEDAVDAERLKHLIITPSGCGEQNMIGMTPTVIAVHYLDQTEQWEKFGLEKRQEALNLINRGYTQQLAFKQPNWAYAAFKNRASSTWLTAYVVKVFSLAANLIGIDSEVLCGAVKWLILEKQKPDGVFQEDGPVIHQEMIGGVRTAQEADVSLTAFVLIALQEAKDICRAQVNNLEANINKAGDYIESRYADVRRPYTLAIAGYALALLERLNGATLQKFLNAATEKNRWEEARQKLYSVEATSYALLALLLLKDFDAVPPVVRWLNEQRYYGRGYGSTQATFMVFQALAQYQTDVPDHKDLNMEVALQLPSRSSPSKFRLVWEAGSLLRSEATKQNEGFKLTAKGKGQGTLSVVAVYYAKTKRKVVCKNFDLRVTLKPAPDTVKKPQEAKSTMILGICTRYLGDQDATMSILDISMMTGFIPDTDDLKLLATGVDRYISKYEMNKDFSKNTLIIYLDKVSHSEEECLSFKIHQFFNVGLIQPGSVKVYSYYNLDETCTQFYHPEKEDGMLNKLCHKDLCRCAEENCFIQLPEKITLDERLEKACEPGVDYVYKTKLLKMELSDDFDEYIMTIEQVIKSGSDEVQAGKERRFISHIKCRDALHLKEGKHYLMWGLSSDLWGERPNMSYIIGKDTWVEAWPEAEECQDEENQQQCQDLGTFTENMVVFGCPN.

The signal sequence occupies residues 1–22 (MGPAAGPSLLLLLLASVSLALG). Residues serine 70, serine 296, and serine 302 each carry the phosphoserine modification. 13 cysteine pairs are disulfide-bonded: cysteine 557–cysteine 821, cysteine 630–cysteine 666, cysteine 698–cysteine 725, cysteine 699–cysteine 732, cysteine 712–cysteine 733, cysteine 878–cysteine 1517, cysteine 1106–cysteine 1163, cysteine 1363–cysteine 1493, cysteine 1394–cysteine 1462, cysteine 1510–cysteine 1515, cysteine 1522–cysteine 1593, cysteine 1540–cysteine 1664, and cysteine 1640–cysteine 1649. Serine 676 is modified (phosphoserine). The Anaphylatoxin-like domain occupies 698–733 (CCEDGMRENPMQFSCQRRARYVSLGEACVKAFLDCC). A glycan (N-linked (GlcNAc...) asparagine) is linked at asparagine 944. A Phosphoserine modification is found at serine 973. A cross-link (isoglutamyl cysteine thioester (Cys-Gln)) is located at residues 1015–1018 (CGEQ). Serine 1326 carries the phosphoserine modification. Residues 1522–1664 (CFIQLPEKIT…FTENMVVFGC (143 aa)) form the NTR domain. Phosphoserine is present on serine 1576. Residue asparagine 1620 is glycosylated (N-linked (GlcNAc...) asparagine). Residues 1637-1662 (AEECQDEENQQQCQDLGTFTENMVVF) are interaction with CFP/properdin.

In terms of assembly, in absence of complement activation, the C3 precursor is first processed by the removal of 4 Arg residues, forming two chains, beta and alpha, linked by a disulfide bond. As to quaternary structure, complement C3b is composed of complement C3b and complement C3 beta chains that are associated via disulfide bonds. Non-enzymatic component of the C5 convertase, also named C4bC2bC3b, composed of the serine protease complement C2b (C2), complement C3b, as well as complement C4b (C4). Non-enzymatic component of the C5 convertase of the alternative complement pathways composed of the serine protease complement CFB and complement C3b. Interacts with CFP; interaction takes place together with CFB in the alternative complement system and allows the complex to become active. Interacts with CR1 (via Sushi 8 and Sushi 9 domains). Interacts with CFH. Interacts with CFH. Interacts with CR2. In terms of assembly, during pregnancy, C3dg exists as a complex (probably a 2:2:2 heterohexamer) with AGT and the proform of PRG2. Interacts with CR2 (via the N-terminal Sushi domains 1 and 2). In terms of processing, C3 precursor is first processed by the removal of 4 Arg residues, forming two chains, beta and alpha, linked by a disulfide bond. During activation of the complement systems, the alpha chain is cleaved into C3a and C3b by the C3 convertase: C3b stays linked to the beta chain, while C3a is released in the plasma. The alpha chain is cleaved by the serine protease complement C2b component of the C3 convertase to generate C3a and C3b following activation by the classical, lectin and GZMK complement systems. The alpha chain is cleaved by CFB component of the C3 convertase to generate C3a and C3b following activation by the alternative complement system. Post-translationally, C3a is further processed by carboxypeptidases to release the C-terminal arginine residue generating the acylation stimulating protein (ASP). Levels of ASP are increased in adipocytes in the postprandial period and by insulin and dietary chylomicrons. Complement C3b is rapidly split in two positions by factor I (CFI) and a cofactor (CFH) to form iC3b (inactivated C3b) and C3f which is released. CFI and CFH catalyze proteolytic degradation of already-deposited complement C3b. Then iC3b is slowly cleaved (possibly by CFI) to form C3c (beta chain + alpha' chain fragment 1 + alpha' chain fragment 2), C3dg and C3f. Other proteases produce other fragments such as C3d or C3g. In terms of processing, upon activation, the internal thioester bond reacts with carbohydrate antigens on the target surface to form amide or ester bonds, leading to covalent association with the surface of pathogens. Post-translationally, complement C3b interacts with complement C4b via a thioester linkage. Phosphorylated by FAM20C in the extracellular medium.

It is found in the secreted. Its subcellular location is the cell surface. Its activity is regulated as follows. Complement activation is inhibited by VSIG4. Its function is as follows. Precursor of non-enzymatic components of the classical, alternative, lectin and GZMK complement pathways, which consist in a cascade of proteins that leads to phagocytosis and breakdown of pathogens and signaling that strengthens the adaptive immune system. Functionally, non-enzymatic component of C5 convertase. Generated following cleavage by C3 convertase, it covalently attaches to the surface of pathogens, where it acts as an opsonin that marks the surface of antigens for removal. Complement C3b binds covalently via its reactive thioester, to cell surface carbohydrates or immune aggregates. Together with complement C4b, it then recruits the serine protease complement C2b to form the C5 convertase, which cleaves and activate C5, the next component of the complement pathways. In the alternative complement pathway, recruits the serine protease CFB to form the C5 convertase that cleaves and activates C5. Mediator of local inflammatory process released following cleavage by C3 convertase. Acts by binding to its receptor, C3AR1, activating G protein-coupled receptor signaling, promoting the phosphorylation, ARRB2-mediated internalization and endocytosis of C3AR1. C3a anaphylatoxin stimulates the activation of immune cells such as mast cells and basophilic leukocytes to release inflammation agents, such as cytokines, chemokines and histamine, which promote inflammation development. Also acts as potent chemoattractant for the migration of macrophages and neutrophils to the inflamed tissues, resulting in neutralization of the inflammatory triggers by multiple ways, such as phagocytosis and generation of reactive oxidants. In terms of biological role, adipogenic hormone that stimulates triglyceride synthesis and glucose transport in adipocytes, regulating fat storage and playing a role in postprandial triglyceride clearance. Appears to stimulate triglyceride synthesis via activation of the PLC, MAPK and AKT signaling pathways. Acts by binding to its receptor, C5AR2, activating G protein-coupled receptor signaling, promoting the phosphorylation, ARRB2-mediated internalization and endocytosis of C5AR2. Its function is as follows. Acts as a chemoattractant for neutrophils in chronic inflammation. The protein is Complement C3 of Cavia porcellus (Guinea pig).